We begin with the raw amino-acid sequence, 36 residues long: U-metritoxin-Msn1a (36 aa).

In terms of domain architecture, ShKT spans 4–36 (CKDKLPACGEYRGSFCKLEKVKSNCEKTCGVKC). 3 cysteine pairs are disulfide-bonded: cysteine 4-cysteine 36, cysteine 11-cysteine 28, and cysteine 19-cysteine 32.

Belongs to the sea anemone type 1 potassium channel toxin family. Type 1b subfamily.

Its subcellular location is the secreted. The protein localises to the nematocyst. Has hemolytic activity. Inhibits voltage-gated potassium channels (Kv1/KCNA). The polypeptide is U-metritoxin-Msn1a (Metridium senile (Brown sea anemone)).